The sequence spans 198 residues: Recombination protein RecR (198 aa).

The C4-type zinc finger occupies 57–72; the sequence is CSVCGRLTDDDPCSIC. The region spanning 80–175 is the Toprim domain; the sequence is TTILVLEDSR…KVTRLARGLA (96 aa).

Belongs to the RecR family.

May play a role in DNA repair. It seems to be involved in an RecBC-independent recombinational process of DNA repair. It may act with RecF and RecO. This is Recombination protein RecR from Streptococcus pneumoniae (strain Hungary19A-6).